Consider the following 184-residue polypeptide: Shikimate kinase (184 aa).

12 to 17 serves as a coordination point for ATP; it reads GSGKST. S16 is a binding site for Mg(2+). Substrate is bound by residues D34, R58, and G80. ATP is bound at residue R117. R136 serves as a coordination point for substrate. R153 is an ATP binding site. A disordered region spans residues 164 to 184; the sequence is SRLDDPTPNTSPSSTASGAAT. Residues 169-184 are compositionally biased toward low complexity; sequence PTPNTSPSSTASGAAT.

This sequence belongs to the shikimate kinase family. Monomer. The cofactor is Mg(2+).

It is found in the cytoplasm. It carries out the reaction shikimate + ATP = 3-phosphoshikimate + ADP + H(+). The protein operates within metabolic intermediate biosynthesis; chorismate biosynthesis; chorismate from D-erythrose 4-phosphate and phosphoenolpyruvate: step 5/7. Functionally, catalyzes the specific phosphorylation of the 3-hydroxyl group of shikimic acid using ATP as a cosubstrate. The sequence is that of Shikimate kinase from Mycobacterium ulcerans (strain Agy99).